Here is a 398-residue protein sequence, read N- to C-terminus: Putative F-box protein At4g17780 (398 aa).

One can recognise an F-box domain in the interval 8–55 (PSSIYIVADLLEDIFLRLPLKSILISKSVSKRWRSILESKTFVERRMS).

The protein is Putative F-box protein At4g17780 of Arabidopsis thaliana (Mouse-ear cress).